A 279-amino-acid chain; its full sequence is MAKNNNIVIVFDFDKTIIDVDSDNWVVDELGFTDLFNQLLPTMPWNSLMNRMMKELHDHGKTIEEIKQVLRRIPIHPRVIPAIKSAHALGCELRIVSDANTLFIETIIEHLGIGEFFSEINTNPGLVDEQGRLIVSPYHDFTKSSHGCSRCPPNMCKGLIIDRIQASLTKEGKTSKMIYLGDGAGDYCPSLGLKAEDYMMPRKNFPVWDLISQNPMLVKATVRDWTDGEDMERILMEIINEIMSSEEGEENDKMLSSENCKISVGIVHEPIQVPLNLVK.

The Nucleophile role is filled by Asp-12. Asp-12 and Asp-14 together coordinate Mg(2+). Catalysis depends on Asp-14, which acts as the Proton donor. The substrate site is built by Asp-23 and Asp-98. Residue Asp-182 coordinates Mg(2+).

Belongs to the HAD-like hydrolase superfamily. In terms of assembly, tetramer. Mg(2+) serves as cofactor.

It carries out the reaction diphosphate + H2O = 2 phosphate + H(+). In terms of biological role, catalyzes the specific cleavage of pyrophosphate. This chain is Inorganic pyrophosphatase 2, found in Arabidopsis thaliana (Mouse-ear cress).